The sequence spans 544 residues: Methionine--tRNA ligase 2 (544 aa).

The short motif at 10-20 (PYANGSLHLGH) is the 'HIGH' region element. 4 residues coordinate Zn(2+): Cys-141, Cys-144, Cys-153, and Cys-156. The short motif at 329–333 (KLSTS) is the 'KMSKS' region element. Thr-332 contacts ATP.

Belongs to the class-I aminoacyl-tRNA synthetase family. MetG type 1 subfamily. In terms of assembly, monomer. Zn(2+) is required as a cofactor.

Its subcellular location is the cytoplasm. It catalyses the reaction tRNA(Met) + L-methionine + ATP = L-methionyl-tRNA(Met) + AMP + diphosphate. In terms of biological role, is required not only for elongation of protein synthesis but also for the initiation of all mRNA translation through initiator tRNA(fMet) aminoacylation. The chain is Methionine--tRNA ligase 2 from Bacillus anthracis.